We begin with the raw amino-acid sequence, 249 residues long: Probable transcriptional regulatory protein OTBS_0251 (249 aa).

This sequence belongs to the TACO1 family.

Its subcellular location is the cytoplasm. The protein is Probable transcriptional regulatory protein OTBS_0251 of Orientia tsutsugamushi (strain Boryong) (Rickettsia tsutsugamushi).